Reading from the N-terminus, the 271-residue chain is uncharacterized protein (271 aa).

The protein belongs to the metallo-dependent hydrolases superfamily. Peptidase M19 family.

This is an uncharacterized protein from Klebsiella pneumoniae.